The primary structure comprises 884 residues: DNA mismatch repair protein MutS (884 aa).

ATP is bound at residue 601-608 (GPNMSGKS). The tract at residues 826 to 845 (ESQLSFFGGEQSSKKQDKPL) is disordered.

This sequence belongs to the DNA mismatch repair MutS family.

Its function is as follows. This protein is involved in the repair of mismatches in DNA. It is possible that it carries out the mismatch recognition step. This protein has a weak ATPase activity. This Bacillus cereus (strain ATCC 14579 / DSM 31 / CCUG 7414 / JCM 2152 / NBRC 15305 / NCIMB 9373 / NCTC 2599 / NRRL B-3711) protein is DNA mismatch repair protein MutS.